A 475-amino-acid polypeptide reads, in one-letter code: Probable sensor histidine kinase TcrY (475 aa).

Residues 1–153 lie on the Extracellular side of the membrane; it reads MGITAATEMA…NVDATMLQML (153 aa). A helical transmembrane segment spans residues 154-174; it reads IIFGIVTVIALVAATTAGIVI. Residues 175–475 are Cytoplasmic-facing; the sequence is IKRALAPLRR…GWQPLESSPR (301 aa). One can recognise an HAMP domain in the interval 176–238; the sequence is KRALAPLRRV…MLDHIAAALS (63 aa). The Histidine kinase domain maps to 253–466; that stretch reads DASHELRTPL…EFAVRLPLDG (214 aa). His256 carries the phosphohistidine; by autocatalysis modification.

As to quaternary structure, homodimer. The cofactor is a divalent metal cation. In terms of processing, autophosphorylated.

It is found in the cell membrane. It catalyses the reaction ATP + protein L-histidine = ADP + protein N-phospho-L-histidine.. In terms of biological role, member of the two-component regulatory system TcrY/TcrX. Activates TcrX by phosphorylation. The chain is Probable sensor histidine kinase TcrY (tcrY) from Mycobacterium tuberculosis (strain ATCC 25618 / H37Rv).